We begin with the raw amino-acid sequence, 240 residues long: Large ribosomal subunit protein uL2 (240 aa).

The segment covering 1-20 (MGKRLQSQNRGKGTPRYTSP) has biased composition (polar residues). Disordered stretches follow at residues 1–33 (MGKRLQSQNRGKGTPRYTSPTHKRKGAVKYRKF) and 204–240 (PFGGGNTQHAGKPTTISRHTSPGRKVGHIAARRTGKR). Basic residues-rich tracts occupy residues 21 to 30 (THKRKGAVKY) and 224 to 240 (SPGRKVGHIAARRTGKR).

Belongs to the universal ribosomal protein uL2 family. Part of the 50S ribosomal subunit. Forms a bridge to the 30S subunit in the 70S ribosome.

Functionally, one of the primary rRNA binding proteins. Required for association of the 30S and 50S subunits to form the 70S ribosome, for tRNA binding and peptide bond formation. It has been suggested to have peptidyltransferase activity; this is somewhat controversial. Makes several contacts with the 16S rRNA in the 70S ribosome. This is Large ribosomal subunit protein uL2 from Methanococcus aeolicus (strain ATCC BAA-1280 / DSM 17508 / OCM 812 / Nankai-3).